We begin with the raw amino-acid sequence, 376 residues long: Glutamate 5-kinase (376 aa).

Residue Lys-18 coordinates ATP. Residues Ser-58, Asp-145, and Asn-157 each coordinate substrate. ATP-binding positions include 177–178 (SD) and 218–224 (TGGMASK). The 79-residue stretch at 280-358 (TGALTLDAGA…SELPGELRRP (79 aa)) folds into the PUA domain.

Belongs to the glutamate 5-kinase family.

It is found in the cytoplasm. The enzyme catalyses L-glutamate + ATP = L-glutamyl 5-phosphate + ADP. It participates in amino-acid biosynthesis; L-proline biosynthesis; L-glutamate 5-semialdehyde from L-glutamate: step 1/2. Its function is as follows. Catalyzes the transfer of a phosphate group to glutamate to form L-glutamate 5-phosphate. This chain is Glutamate 5-kinase, found in Mycobacterium tuberculosis (strain CDC 1551 / Oshkosh).